Here is a 177-residue protein sequence, read N- to C-terminus: Probable DNA-directed RNA polymerase subunit delta (177 aa).

One can recognise an HTH HARE-type domain in the interval 14–81 (CSMIEVVHSV…GENRWGLRSW (68 aa)). Residues 91–177 (ILPQPKPKKK…DETEEEEEEL (87 aa)) are disordered. Residues 106-177 (DGFDDYIEED…DETEEEEEEL (72 aa)) are compositionally biased toward acidic residues.

This sequence belongs to the RpoE family. RNAP is composed of a core of 2 alpha, a beta and a beta' subunits. The core is associated with a delta subunit and one of several sigma factors.

In terms of biological role, participates in both the initiation and recycling phases of transcription. In the presence of the delta subunit, RNAP displays an increased specificity of transcription, a decreased affinity for nucleic acids, and an increased efficiency of RNA synthesis because of enhanced recycling. This is Probable DNA-directed RNA polymerase subunit delta from Bacillus cereus (strain G9842).